The following is a 727-amino-acid chain: Pre-B-cell leukemia transcription factor-interacting protein 1 (727 aa).

The span at 1 to 10 (MASCPDSDNS) shows a compositional bias: polar residues. The disordered stretch occupies residues 1–169 (MASCPDSDNS…GREPSSSQPV (169 aa)). 4 positions are modified to phosphoserine: Ser131, Ser142, Ser143, and Ser144. Thr148 is subject to Phosphothreonine. Residue Ser164 is modified to Phosphoserine. Coiled coils occupy residues 270–350 (FLLD…RGVD) and 377–405 (DPSLLEQHKQLEAEAKALRQELQRQWQLL). Over residues 446 to 456 (QGINTGRSPND) the composition is skewed to polar residues. 2 disordered regions span residues 446–565 (QGIN…NSPD) and 694–727 (LKKRSRKKEKHSWNPRVVGPREEHSRHPHHYHQG). Residues 473 to 563 (WGGKEKWRGG…QKHSWGKDNS (91 aa)) show a composition bias toward basic and acidic residues. Residues 486–506 (QKAEHWKPRKEESGQERQRSW) carry the Nuclear localization signal motif. Ser563 bears the Phosphoserine mark. Residues 691–716 (DKALKKRSRKKEKHSWNPRVVGPREE) carry the Nuclear localization signal motif. Over residues 694–703 (LKKRSRKKEK) the composition is skewed to basic residues.

Interacts with ESR1, PBX1, PBX2 and PBX3. Interacts with TEX11.

The protein localises to the cytoplasm. It is found in the cytoskeleton. Its subcellular location is the nucleus. Regulator of pre-B-cell leukemia transcription factors (BPXs) function. Inhibits the binding of PBX1-HOX complex to DNA and blocks the transcriptional activity of E2A-PBX1. Tethers estrogen receptor-alpha (ESR1) to microtubules and allows them to influence estrogen receptors-alpha signaling. The sequence is that of Pre-B-cell leukemia transcription factor-interacting protein 1 (Pbxip1) from Mus musculus (Mouse).